A 480-amino-acid polypeptide reads, in one-letter code: Protein nucleotidyltransferase YdiU (480 aa).

Positions 87, 89, 90, 110, 122, 123, 173, and 180 each coordinate ATP. Aspartate 249 serves as the catalytic Proton acceptor. Residues asparagine 250 and aspartate 259 each contribute to the Mg(2+) site. Position 259 (aspartate 259) interacts with ATP.

The protein belongs to the SELO family. Requires Mg(2+) as cofactor. Mn(2+) serves as cofactor.

It catalyses the reaction L-seryl-[protein] + ATP = 3-O-(5'-adenylyl)-L-seryl-[protein] + diphosphate. The enzyme catalyses L-threonyl-[protein] + ATP = 3-O-(5'-adenylyl)-L-threonyl-[protein] + diphosphate. It carries out the reaction L-tyrosyl-[protein] + ATP = O-(5'-adenylyl)-L-tyrosyl-[protein] + diphosphate. The catalysed reaction is L-histidyl-[protein] + UTP = N(tele)-(5'-uridylyl)-L-histidyl-[protein] + diphosphate. It catalyses the reaction L-seryl-[protein] + UTP = O-(5'-uridylyl)-L-seryl-[protein] + diphosphate. The enzyme catalyses L-tyrosyl-[protein] + UTP = O-(5'-uridylyl)-L-tyrosyl-[protein] + diphosphate. In terms of biological role, nucleotidyltransferase involved in the post-translational modification of proteins. It can catalyze the addition of adenosine monophosphate (AMP) or uridine monophosphate (UMP) to a protein, resulting in modifications known as AMPylation and UMPylation. This is Protein nucleotidyltransferase YdiU from Anoxybacillus flavithermus (strain DSM 21510 / WK1).